Here is a 216-residue protein sequence, read N- to C-terminus: LGLQNATSPIMEELIAFHDHALMIIFLISSLVLYIISLMLTTKLTHTSTMNAQEIEMIWTILPAVILIMIALPSLRILYMTDEFNKPYLTLKAIGHQWYWSYEYSDYEDLAFDSYITPTYFLEPGEFRLLEVDNRTTLPMEADIRVLISSQDVLHSWAVPALGVKTDAIPGRLNQAMLTSTRPGLYYGQCSEICGSNHSFMPIVLEFIYFQDFEVW.

Residues L1–S8 are Mitochondrial intermembrane-facing. A helical membrane pass occupies residues P9–M39. Residues L40–Q53 are Mitochondrial matrix-facing. Residues E54–T81 traverse the membrane as a helical segment. The Mitochondrial intermembrane portion of the chain corresponds to D82–W216. Residues H155, C190, E192, C194, H198, and M201 each coordinate Cu cation. Residue E192 coordinates Mg(2+).

The protein belongs to the cytochrome c oxidase subunit 2 family. In terms of assembly, component of the cytochrome c oxidase (complex IV, CIV), a multisubunit enzyme composed of 14 subunits. The complex is composed of a catalytic core of 3 subunits MT-CO1, MT-CO2 and MT-CO3, encoded in the mitochondrial DNA, and 11 supernumerary subunits COX4I, COX5A, COX5B, COX6A, COX6B, COX6C, COX7A, COX7B, COX7C, COX8 and NDUFA4, which are encoded in the nuclear genome. The complex exists as a monomer or a dimer and forms supercomplexes (SCs) in the inner mitochondrial membrane with NADH-ubiquinone oxidoreductase (complex I, CI) and ubiquinol-cytochrome c oxidoreductase (cytochrome b-c1 complex, complex III, CIII), resulting in different assemblies (supercomplex SCI(1)III(2)IV(1) and megacomplex MCI(2)III(2)IV(2)). Found in a complex with TMEM177, COA6, COX18, COX20, SCO1 and SCO2. Interacts with TMEM177 in a COX20-dependent manner. Interacts with COX20. Interacts with COX16. Requires Cu cation as cofactor.

It localises to the mitochondrion inner membrane. The enzyme catalyses 4 Fe(II)-[cytochrome c] + O2 + 8 H(+)(in) = 4 Fe(III)-[cytochrome c] + 2 H2O + 4 H(+)(out). Component of the cytochrome c oxidase, the last enzyme in the mitochondrial electron transport chain which drives oxidative phosphorylation. The respiratory chain contains 3 multisubunit complexes succinate dehydrogenase (complex II, CII), ubiquinol-cytochrome c oxidoreductase (cytochrome b-c1 complex, complex III, CIII) and cytochrome c oxidase (complex IV, CIV), that cooperate to transfer electrons derived from NADH and succinate to molecular oxygen, creating an electrochemical gradient over the inner membrane that drives transmembrane transport and the ATP synthase. Cytochrome c oxidase is the component of the respiratory chain that catalyzes the reduction of oxygen to water. Electrons originating from reduced cytochrome c in the intermembrane space (IMS) are transferred via the dinuclear copper A center (CU(A)) of subunit 2 and heme A of subunit 1 to the active site in subunit 1, a binuclear center (BNC) formed by heme A3 and copper B (CU(B)). The BNC reduces molecular oxygen to 2 water molecules using 4 electrons from cytochrome c in the IMS and 4 protons from the mitochondrial matrix. This chain is Cytochrome c oxidase subunit 2 (MT-CO2), found in Callimico goeldii (Goeldi's marmoset).